We begin with the raw amino-acid sequence, 415 residues long: Gamma-glutamyl phosphate reductase (415 aa).

Belongs to the gamma-glutamyl phosphate reductase family.

Its subcellular location is the cytoplasm. The enzyme catalyses L-glutamate 5-semialdehyde + phosphate + NADP(+) = L-glutamyl 5-phosphate + NADPH + H(+). The protein operates within amino-acid biosynthesis; L-proline biosynthesis; L-glutamate 5-semialdehyde from L-glutamate: step 2/2. In terms of biological role, catalyzes the NADPH-dependent reduction of L-glutamate 5-phosphate into L-glutamate 5-semialdehyde and phosphate. The product spontaneously undergoes cyclization to form 1-pyrroline-5-carboxylate. This chain is Gamma-glutamyl phosphate reductase, found in Bacillus cereus (strain ATCC 10987 / NRS 248).